A 169-amino-acid polypeptide reads, in one-letter code: Putative tRNA (cytidine(34)-2'-O)-methyltransferase (169 aa).

The S-adenosyl-L-methionine site is built by Val79, Gly104, Ile125, and Ser134.

It belongs to the class IV-like SAM-binding methyltransferase superfamily. RNA methyltransferase TrmH family. TrmL subfamily.

It is found in the cytoplasm. It carries out the reaction cytidine(34) in tRNA + S-adenosyl-L-methionine = 2'-O-methylcytidine(34) in tRNA + S-adenosyl-L-homocysteine + H(+). The enzyme catalyses 5-carboxymethylaminomethyluridine(34) in tRNA(Leu) + S-adenosyl-L-methionine = 5-carboxymethylaminomethyl-2'-O-methyluridine(34) in tRNA(Leu) + S-adenosyl-L-homocysteine + H(+). In terms of biological role, could methylate the ribose at the nucleotide 34 wobble position in tRNA. In Lactococcus lactis subsp. cremoris (strain MG1363), this protein is Putative tRNA (cytidine(34)-2'-O)-methyltransferase.